The primary structure comprises 628 residues: Patulin synthase (628 aa).

Positions 1–19 (MRLTSGIFHAAIAVAAVGA) are cleaved as a signal peptide. Residue asparagine 49 is glycosylated (N-linked (GlcNAc...) asparagine). FAD-binding positions include 61–62 (TA) and 82–83 (EA). The N-linked (GlcNAc...) asparagine glycan is linked to asparagine 93. 148 to 151 (NYMA) provides a ligand contact to FAD. 6 N-linked (GlcNAc...) asparagine glycosylation sites follow: asparagine 198, asparagine 261, asparagine 283, asparagine 429, asparagine 486, and asparagine 526. Histidine 564 (proton acceptor) is an active-site residue. Asparagine 575 carries an N-linked (GlcNAc...) asparagine glycan. FAD-binding positions include alanine 598 and 609-610 (PQ).

This sequence belongs to the GMC oxidoreductase family. Requires FAD as cofactor.

The protein resides in the cytoplasm. Its subcellular location is the cell cortex. It is found in the vacuole. It localises to the secreted. The protein localises to the cell wall. It catalyses the reaction (E)-ascladiol + A = patulin + AH2. Its pathway is mycotoxin biosynthesis; patulin biosynthesis. Patulin synthase; part of the gene cluster that mediates the biosynthesis of patulin, an acetate-derived tetraketide mycotoxin produced by several fungal species that shows antimicrobial properties against several bacteria. PatE catalyzes the last step of the pathway which is the conversion of E-ascladiol to patulin. The pathway begins with the synthesis of 6-methylsalicylic acid by the polyketide synthase (PKS) patK via condensation of acetate and malonate units. The 6-methylsalicylic acid decarboxylase patG then catalyzes the decarboxylation of 6-methylsalicylic acid to yield m-cresol (also known as 3-methylphenol). These first reactions occur in the cytosol. The intermediate m-cresol is then transported into the endoplasmic reticulum where the cytochrome P450 monooxygenase patH converts it to m-hydroxybenzyl alcohol, which is further converted to gentisyl alcohol by the cytochrome P450 monooxygenase patI. The oxidoreductases patJ and patO further convert gentisyl alcohol to isoepoxydon in the vacuole. PatN catalyzes then the transformation of isoepoxydon into phyllostine. The cluster protein patF is responsible for the conversion from phyllostine to neopatulin whereas the alcohol dehydrogenase patD converts neopatulin to E-ascladiol. The steps between isoepoxydon and E-ascladiol occur in the cytosol, and E-ascladiol is probably secreted to the extracellular space by one of the cluster-specific transporters patC or patM. Finally, the secreted patulin synthase patE catalyzes the conversion of E-ascladiol to patulin. The chain is Patulin synthase from Penicillium expansum (Blue mold rot fungus).